Consider the following 285-residue polypeptide: Probable xyloglucan endotransglucosylase/hydrolase protein 12 (285 aa).

The N-terminal stretch at 1-25 is a signal peptide; it reads MAAFATKQSPLLLASLLILIGVATG. The region spanning 26-215 is the GH16 domain; that stretch reads SFYDSFDITW…WTNAPFSASY (190 aa). Glutamate 101 serves as the catalytic Nucleophile. Catalysis depends on glutamate 105, which acts as the Proton donor. Glutamate 105 provides a ligand contact to xyloglucan. Asparagine 109 carries an N-linked (GlcNAc...) asparagine glycan. Xyloglucan-binding positions include 118-120, 128-130, 194-195, and glycine 199; these read HTN, NRE, and DW. Cystine bridges form between cysteine 224/cysteine 235 and cysteine 268/cysteine 282. Arginine 273 is a binding site for xyloglucan.

It belongs to the glycosyl hydrolase 16 family. XTH group 2 subfamily. Contains at least one intrachain disulfide bond essential for its enzymatic activity. As to expression, root specific.

The protein localises to the secreted. Its subcellular location is the cell wall. It is found in the extracellular space. It localises to the apoplast. The enzyme catalyses breaks a beta-(1-&gt;4) bond in the backbone of a xyloglucan and transfers the xyloglucanyl segment on to O-4 of the non-reducing terminal glucose residue of an acceptor, which can be a xyloglucan or an oligosaccharide of xyloglucan.. In terms of biological role, catalyzes xyloglucan endohydrolysis (XEH) and/or endotransglycosylation (XET). Cleaves and religates xyloglucan polymers, an essential constituent of the primary cell wall, and thereby participates in cell wall construction of growing tissues. The chain is Probable xyloglucan endotransglucosylase/hydrolase protein 12 (XTH12) from Arabidopsis thaliana (Mouse-ear cress).